The sequence spans 286 residues: D-tagatose-1,6-bisphosphate aldolase subunit KbaY (286 aa).

The active-site Proton donor is the aspartate 82. Zn(2+) contacts are provided by histidine 83 and histidine 180. Glycine 181 serves as a coordination point for dihydroxyacetone phosphate. Residue histidine 208 coordinates Zn(2+). Residues 209-211 (GAS) and 230-233 (NVAT) each bind dihydroxyacetone phosphate.

Belongs to the class II fructose-bisphosphate aldolase family. TagBP aldolase KbaY subfamily. In terms of assembly, homotetramer. Forms a complex with KbaZ. Zn(2+) is required as a cofactor.

The catalysed reaction is D-tagatofuranose 1,6-bisphosphate = D-glyceraldehyde 3-phosphate + dihydroxyacetone phosphate. Its pathway is carbohydrate metabolism; D-tagatose 6-phosphate degradation; D-glyceraldehyde 3-phosphate and glycerone phosphate from D-tagatose 6-phosphate: step 2/2. Its function is as follows. Catalytic subunit of the tagatose-1,6-bisphosphate aldolase KbaYZ, which catalyzes the reversible aldol condensation of dihydroxyacetone phosphate (DHAP or glycerone-phosphate) with glyceraldehyde 3-phosphate (G3P) to produce tagatose 1,6-bisphosphate (TBP). Requires KbaZ subunit for full activity and stability. The sequence is that of D-tagatose-1,6-bisphosphate aldolase subunit KbaY from Escherichia coli O45:K1 (strain S88 / ExPEC).